A 640-amino-acid chain; its full sequence is Paramyosin, short form (640 aa).

Nonhelical region regions lie at residues 1-122 (MALA…PDTV) and 420-640 (KLEQ…TITE). Residues 123–619 (VERSRQRRRR…IIRAKHRTFV (497 aa)) are a coiled coil.

The protein belongs to the paramyosin family. Post-translationally, phosphorylated. Found in all adult muscle tissues except in indirect flight muscles and a set of temporary abdominal muscles. Not detected in larval muscle.

It localises to the cytoplasm. Its subcellular location is the myofibril. In terms of biological role, paramyosin is a major structural component of many thick filaments isolated from invertebrate muscles. This is Paramyosin, short form (Prm) from Drosophila melanogaster (Fruit fly).